The chain runs to 529 residues: MTNLVPVGRALLSVSDKSGLLDLARALAELEVELISTGGTAATLRAAGLKVRDVAEVTGFPEMMDGRVKTLHPMVHGGLLALRDDDEHLVAMAAHGIEPIDLLVVNLYPFEAAVARGASYDDCIENIDIGGPAMIRAAAKNHRFVNVVTDTADYKALLDELRAHDGATTLAFRQKLALTAYSRTAAYDAAVSAWMAGALKSEAPRRRTFAGTLAQTMRYGENPHQKAAFYTDGSHRPGVATAKQWQGKELSYNNINDTDAAFELVAEFDPSEGPACVIVKHANPCGVARGATLAEAYGRAFDCDRVSAFGGIIALNQPLDAATAEKITEIFTEVVIAPGADEEARAIFAAKKNLRLLTTEALPDPLAPGLAFKQVAGGFLVQDRDAGHVDALDLKVVTKRAPSDAELADLLFAWTVAKHVKSNAIVYVKDGATVGVGAGQMSRVDSTRIAARKSQDMAQALGLAQPLTQGSVVASDAFFPFADGLLAAAEAGATAIIQPGGSMRDDEVIAAADEAGLAMVFTGQRHFRH.

The region spanning 2–149 is the MGS-like domain; that stretch reads TNLVPVGRAL…KNHRFVNVVT (148 aa).

The protein belongs to the PurH family.

The catalysed reaction is (6R)-10-formyltetrahydrofolate + 5-amino-1-(5-phospho-beta-D-ribosyl)imidazole-4-carboxamide = 5-formamido-1-(5-phospho-D-ribosyl)imidazole-4-carboxamide + (6S)-5,6,7,8-tetrahydrofolate. It catalyses the reaction IMP + H2O = 5-formamido-1-(5-phospho-D-ribosyl)imidazole-4-carboxamide. It functions in the pathway purine metabolism; IMP biosynthesis via de novo pathway; 5-formamido-1-(5-phospho-D-ribosyl)imidazole-4-carboxamide from 5-amino-1-(5-phospho-D-ribosyl)imidazole-4-carboxamide (10-formyl THF route): step 1/1. It participates in purine metabolism; IMP biosynthesis via de novo pathway; IMP from 5-formamido-1-(5-phospho-D-ribosyl)imidazole-4-carboxamide: step 1/1. In Cereibacter sphaeroides (strain ATCC 17025 / ATH 2.4.3) (Rhodobacter sphaeroides), this protein is Bifunctional purine biosynthesis protein PurH.